The primary structure comprises 113 residues: Immunoglobulin lambda variable 2-23 (113 aa).

An N-terminal signal peptide occupies residues 1–19; the sequence is MAWALLLLTLLTQDTGSWA. Q20 carries the pyrrolidone carboxylic acid modification. The segment at 20–44 is framework-1; that stretch reads QSALTQPASVSGSPGQSITISCTGT. The region spanning 20 to 113 is the Ig-like domain; that stretch reads QSALTQPASV…EADYYCCSYA (94 aa). Cysteines 41 and 109 form a disulfide. Positions 45 to 53 are complementarity-determining-1; the sequence is SSDVGSYNL. The framework-2 stretch occupies residues 54–70; sequence VSWYQQHPGKAPKLMIY. The tract at residues 71-73 is complementarity-determining-2; that stretch reads EGS. The interval 73–92 is disordered; it reads SKRPSGVSNRFSGSKSGNTA. The tract at residues 74–109 is framework-3; the sequence is KRPSGVSNRFSGSKSGNTASLTISGLQAEDEADYYC. Residues 78–92 show a composition bias toward polar residues; sequence GVSNRFSGSKSGNTA. A complementarity-determining-3 region spans residues 110–113; the sequence is CSYA.

As to quaternary structure, immunoglobulins are composed of two identical heavy chains and two identical light chains; disulfide-linked.

Its subcellular location is the secreted. The protein resides in the cell membrane. Functionally, v region of the variable domain of immunoglobulin light chains that participates in the antigen recognition. Immunoglobulins, also known as antibodies, are membrane-bound or secreted glycoproteins produced by B lymphocytes. In the recognition phase of humoral immunity, the membrane-bound immunoglobulins serve as receptors which, upon binding of a specific antigen, trigger the clonal expansion and differentiation of B lymphocytes into immunoglobulins-secreting plasma cells. Secreted immunoglobulins mediate the effector phase of humoral immunity, which results in the elimination of bound antigens. The antigen binding site is formed by the variable domain of one heavy chain, together with that of its associated light chain. Thus, each immunoglobulin has two antigen binding sites with remarkable affinity for a particular antigen. The variable domains are assembled by a process called V-(D)-J rearrangement and can then be subjected to somatic hypermutations which, after exposure to antigen and selection, allow affinity maturation for a particular antigen. This Homo sapiens (Human) protein is Immunoglobulin lambda variable 2-23.